The following is a 660-amino-acid chain: Acetyl-coenzyme A synthetase (660 aa).

CoA contacts are provided by residues 197 to 200 (RGGK) and Thr317. Residues 397 to 399 (GEP), 421 to 426 (DTFWQT), Asp512, and Arg528 each bind ATP. Position 536 (Ser536) interacts with CoA. Arg539 is a binding site for ATP. The Mg(2+) site is built by Val550 and Val555. Residue Lys625 is modified to N6-acetyllysine.

It belongs to the ATP-dependent AMP-binding enzyme family. Mg(2+) serves as cofactor. In terms of processing, acetylated. Deacetylation by the SIR2-homolog deacetylase activates the enzyme.

The enzyme catalyses acetate + ATP + CoA = acetyl-CoA + AMP + diphosphate. In terms of biological role, catalyzes the conversion of acetate into acetyl-CoA (AcCoA), an essential intermediate at the junction of anabolic and catabolic pathways. AcsA undergoes a two-step reaction. In the first half reaction, AcsA combines acetate with ATP to form acetyl-adenylate (AcAMP) intermediate. In the second half reaction, it can then transfer the acetyl group from AcAMP to the sulfhydryl group of CoA, forming the product AcCoA. This is Acetyl-coenzyme A synthetase from Herminiimonas arsenicoxydans.